Here is a 421-residue protein sequence, read N- to C-terminus: Testin (421 aa).

In terms of domain architecture, PET spans 92 to 199 (MILTNPVAAK…GDVKLPCEMD (108 aa)). The disordered stretch occupies residues 133–164 (EKQPVAGSEGAQYRKKQLAKQLPAHDQDPSKC). Residues 155 to 164 (PAHDQDPSKC) show a composition bias toward basic and acidic residues. LIM zinc-binding domains are found at residues 234–297 (YFCY…CDSE), 299–359 (PRCA…NHAV), and 362–421 (QGCH…KMMS).

It belongs to the prickle / espinas / testin family. As to quaternary structure, interacts via LIM domain 1 with ZYX. Interacts (via LIM domain 3) with ENAH and VASP. Interacts with ALKBH4, talin, actin, alpha-actinin, GRIP1 and PXN. Interacts (via LIM domain 2) with ACTL7A (via N-terminus). Heterodimer with ACTL7A; the heterodimer interacts with ENAH to form a heterotrimer.

It localises to the cytoplasm. The protein resides in the cell junction. The protein localises to the focal adhesion. Its function is as follows. Scaffold protein that may play a role in cell adhesion, cell spreading and in the reorganization of the actin cytoskeleton. Plays a role in the regulation of cell proliferation. May act as a tumor suppressor. This is Testin (TES) from Plecturocebus moloch (Dusky titi monkey).